We begin with the raw amino-acid sequence, 681 residues long: U3 small nucleolar ribonucleoprotein protein MPP10 (681 aa).

Ser-61, Ser-120, and Ser-139 each carry phosphoserine. Positions 105 to 147 are enriched in acidic residues; sequence SLLPESEEQEREEDGSEIEADDKEDLEDLEEEEVSDMGNDDPE. 2 disordered regions span residues 105–202 and 216–364; these read SLLP…IVDD and NIEK…EKRQ. A coiled-coil region spans residues 109 to 138; it reads ESEEQEREEDGSEIEADDKEDLEDLEEEEV. Residues 148–162 are compositionally biased toward basic and acidic residues; sequence MGERAENSSKSDLRK. Phosphoserine occurs at positions 163, 167, and 171. Polar residues predominate over residues 180-190; sequence LEQQSKVQNKG. Composition is skewed to basic and acidic residues over residues 193-202 and 216-226; these read KPREKSIVDD and NIEKEEERKDD. Positions 205 to 239 form a coiled coil; that stretch reads FKLSEMEAYLENIEKEEERKDDNDEEEEDIDFFED. Acidic residues predominate over residues 227-247; sequence NDEEEEDIDFFEDIDSDEDEG. At Ser-242 the chain carries Phosphoserine. The span at 253–264 shows a compositional bias: basic residues; that stretch reads KKLKSGKSSRNL. 2 positions are modified to phosphoserine: Ser-275 and Ser-289. The span at 280 to 290 shows a compositional bias: basic and acidic residues; the sequence is TNVHDDELDSN. Coiled-coil stretches lie at residues 284 to 324 and 348 to 382; these read DDEL…NKQH and NVKKNSDEVKSSFEKRQEKMNEKIASLEKELLEKK. Positions 291–318 are enriched in acidic residues; that stretch reads KEDDEIAEEEAEELSISETDEDDDLQEN. Positions 319-329 are enriched in basic and acidic residues; sequence EDNKQHKESLK. A Glycyl lysine isopeptide (Lys-Gly) (interchain with G-Cter in SUMO2) cross-link involves residue Lys-350. The segment covering 351-364 has biased composition (basic and acidic residues); that stretch reads KNSDEVKSSFEKRQ. Glycyl lysine isopeptide (Lys-Gly) (interchain with G-Cter in SUMO2) cross-links involve residues Lys-382 and Lys-394. The stretch at 469-490 forms a coiled coil; the sequence is LAEIYEQEYIKLNQQKTAEEEN. Lys-555 is covalently cross-linked (Glycyl lysine isopeptide (Lys-Gly) (interchain with G-Cter in SUMO2)). Residues 558–575 show a composition bias toward basic and acidic residues; that stretch reads NKAGDIKTAAEKTATDKK. Positions 558 to 606 are disordered; sequence NKAGDIKTAAEKTATDKKRERRKKKYQKRMKIKEKEKRRKLLEKSSVDQ. The stretch at 574 to 604 forms a coiled coil; the sequence is KKRERRKKKYQKRMKIKEKEKRRKLLEKSSV. A compositionally biased stretch (basic residues) spans 576–598; that stretch reads RERRKKKYQKRMKIKEKEKRRKL. Lys-609 is modified (N6-acetyllysine). Residues Lys-632 and Lys-649 each participate in a glycyl lysine isopeptide (Lys-Gly) (interchain with G-Cter in SUMO2) cross-link. A coiled-coil region spans residues 648–670; sequence SKLQDQVKMQINDAKKTEKKKKK. Residues 660–681 form a disordered region; it reads DAKKTEKKKKKRQDISVHKLKL. The span at 672 to 681 shows a compositional bias: basic and acidic residues; it reads QDISVHKLKL.

Belongs to the MPP10 family. As to quaternary structure, part of the small subunit (SSU) processome, composed of more than 70 proteins and the RNA chaperone small nucleolar RNA (snoRNA) U3. Component of a heterotrimeric complex containing IMP3, IMP4 and MPHOSPH10. Interacts with IMP3 and IMP4. Post-translationally, phosphorylated in M (mitotic) phase.

The protein localises to the nucleus. It localises to the nucleolus. Its subcellular location is the chromosome. Functionally, component of the 60-80S U3 small nucleolar ribonucleoprotein (U3 snoRNP). Required for the early cleavages during pre-18S ribosomal RNA processing. Part of the small subunit (SSU) processome, first precursor of the small eukaryotic ribosomal subunit. During the assembly of the SSU processome in the nucleolus, many ribosome biogenesis factors, an RNA chaperone and ribosomal proteins associate with the nascent pre-rRNA and work in concert to generate RNA folding, modifications, rearrangements and cleavage as well as targeted degradation of pre-ribosomal RNA by the RNA exosome. In Homo sapiens (Human), this protein is U3 small nucleolar ribonucleoprotein protein MPP10.